Reading from the N-terminus, the 158-residue chain is Glycine-rich RNA-binding protein 2, mitochondrial (158 aa).

Residues 1-34 (MAFCNKLGGLLRQNISSNGNVPVTSMLGSLRLMS) constitute a mitochondrion transit peptide. In terms of domain architecture, RRM spans 35-113 (TKLFIGGLSW…RHIRVNPAND (79 aa)). The residue at position 43 (Ser-43) is a Phosphoserine. Residues 122 to 157 (GGGGGYSGGGGGYGGGGGGYGGGGGGYGGGGDGGGG) are glycine-rich (GR) required for cell-to-cell movement.

Belongs to the GR-RBP family. Binds to small phloem-mobile single-stranded RNAs (ss-sRNA, e.g. small interfering RNA (siRNA) and microRNA (miRNA)) in the phloeme exudate, including viral-derived sRNA (vsiRNA). Interacts with ORRM2, RBG3/ORRM3 and RBG5/ORRM4.

The protein resides in the mitochondrion. It is found in the secreted. Functionally, promotes the cis-splicing and editing of several mitochondrial RNAs (including NAD5 transcripts). Plays a role in RNA transcription or processing during stress. Binds RNAs and DNAs sequence with a preference to single-stranded nucleic acids. Displays strong affinity to poly(U) sequence. Exerts cold and freezing tolerance, probably by exhibiting an RNA chaperone activity during the cold and freezing adaptation process. Mediates cell-to-cell trafficking of RNA interference (RNAi) signals (small RNAs (sRNA), e.g. small interfering RNA (siRNA) and microRNA (miRNA)) which regulate growth and development, as well as responses to environmental inputs, including pathogen attack; can compromise zucchini yellow mosaic virus (ZYMV) and tobacco rattle virus (TRV) infections at the early stage. The chain is Glycine-rich RNA-binding protein 2, mitochondrial from Arabidopsis thaliana (Mouse-ear cress).